The sequence spans 262 residues: Phosphatidylglycerol--prolipoprotein diacylglyceryl transferase (262 aa).

4 helical membrane passes run 17 to 37 (LAIHWYGLMYLIGFALVYALG), 57 to 77 (LIFYSVLGVVLGGRLGYVLFY), 95 to 115 (GGMSFHGGLIGVIVVMLLFAH), and 119 to 139 (LGFFTVSDFIAPLIPLGLAAG). Arg-140 contributes to the a 1,2-diacyl-sn-glycero-3-phospho-(1'-sn-glycerol) binding site. A run of 3 helical transmembrane segments spans residues 173–193 (PSQLYELGLEGIVLFALLWWY), 200–220 (AGQVSAMFLMGYGAFRFLVEF), and 227–247 (FLGLLAAGLSMGQWLSIPMVL).

Belongs to the Lgt family.

It localises to the cell inner membrane. The catalysed reaction is L-cysteinyl-[prolipoprotein] + a 1,2-diacyl-sn-glycero-3-phospho-(1'-sn-glycerol) = an S-1,2-diacyl-sn-glyceryl-L-cysteinyl-[prolipoprotein] + sn-glycerol 1-phosphate + H(+). It participates in protein modification; lipoprotein biosynthesis (diacylglyceryl transfer). Its function is as follows. Catalyzes the transfer of the diacylglyceryl group from phosphatidylglycerol to the sulfhydryl group of the N-terminal cysteine of a prolipoprotein, the first step in the formation of mature lipoproteins. This is Phosphatidylglycerol--prolipoprotein diacylglyceryl transferase from Bordetella bronchiseptica (strain ATCC BAA-588 / NCTC 13252 / RB50) (Alcaligenes bronchisepticus).